The chain runs to 229 residues: Ribonuclease 3 (229 aa).

The 130-residue stretch at 5–134 folds into the RNase III domain; the sequence is EQKLEQDFGI…FLGALYLDQG (130 aa). Position 47 (Glu47) interacts with Mg(2+). Asp51 is a catalytic residue. Mg(2+) contacts are provided by Asp120 and Glu123. Glu123 is an active-site residue. The region spanning 160–229 is the DRBM domain; that stretch reads DYKTALQERL…AKSALEQLGN (70 aa).

It belongs to the ribonuclease III family. As to quaternary structure, homodimer. Mg(2+) serves as cofactor.

The protein localises to the cytoplasm. It carries out the reaction Endonucleolytic cleavage to 5'-phosphomonoester.. Functionally, digests double-stranded RNA. Involved in the processing of primary rRNA transcript to yield the immediate precursors to the large and small rRNAs (23S and 16S). Also processes some mRNAs, and tRNAs when they are encoded in the rRNA operon. CRISPR (clustered regularly interspaced short palindromic repeat) is an adaptive immune system that provides protection against mobile genetic elements (viruses, transposable elements and conjugative plasmids). CRISPR clusters contain spacers, sequences complementary to antecedent mobile elements, and target invading nucleic acids. CRISPR clusters are transcribed and processed into CRISPR RNA (crRNA). In this organism endogenous ribonuclease 3 and Cas9 are required for correct coprocessing of pre-crRNA and the trans-encoded small RNA (tracrRNA). Cas9, crRNA and tracrRNA are required for cleavage of invading DNA. Complements pre-crRNA and tracRNA coprocessing defects in an rnc deletion in S.pyogenes strain 370. The protein is Ribonuclease 3 of Streptococcus thermophilus (strain ATCC BAA-491 / LMD-9).